The chain runs to 890 residues: Exo-beta-D-glucosaminidase (890 aa).

A signal peptide spans 1 to 18 (MIAKAVAALLLGSGLASA). The propeptide occupies 19 to 26 (AGTPLTSK). Asn-194, Asn-334, and Asn-438 each carry an N-linked (GlcNAc...) asparagine glycan. The Proton donor role is filled by Asp-462. Catalysis depends on Glu-537, which acts as the Nucleophile. Residues Asn-576 and Asn-687 are each glycosylated (N-linked (GlcNAc...) asparagine).

The protein belongs to the glycosyl hydrolase 2 family. Monomer.

Its subcellular location is the secreted. It is found in the extracellular space. The catalysed reaction is Hydrolysis of chitosan or chitosan oligosaccharides to remove successive D-glucosamine residues from the non-reducing termini.. Its function is as follows. Hydrolyzes chitosan and chitooligosaccharides with retention of anomeric configuration. Has no activity against beta-D-galactoside, beta-D-glucuronide, beta-D-mannoside, chitin, glycol chitosan, cellulose, N,N'-diacetylchitibiose and pNP-GlcNAc. In Hypocrea virens (Gliocladium virens), this protein is Exo-beta-D-glucosaminidase.